Here is a 2381-residue protein sequence, read N- to C-terminus: Protein Ycf2 (2381 aa).

1655–1662 (GPMETGRS) provides a ligand contact to ATP.

Belongs to the Ycf2 family.

It is found in the plastid. The protein resides in the chloroplast stroma. Functionally, probable ATPase of unknown function. Its presence in a non-photosynthetic plant (Epifagus virginiana) and experiments in tobacco indicate that it has an essential function which is probably not related to photosynthesis. This Angiopteris evecta (Mule's foot fern) protein is Protein Ycf2.